The sequence spans 435 residues: 3-phosphoshikimate 1-carboxyvinyltransferase (435 aa).

Residues lysine 22, serine 23, and arginine 27 each contribute to the 3-phosphoshikimate site. Position 22 (lysine 22) interacts with phosphoenolpyruvate. Glycine 95 and arginine 123 together coordinate phosphoenolpyruvate. Residues serine 168, glutamine 170, aspartate 319, and lysine 346 each coordinate 3-phosphoshikimate. Phosphoenolpyruvate is bound at residue glutamine 170. Aspartate 319 serves as the catalytic Proton acceptor. Phosphoenolpyruvate-binding residues include arginine 350 and arginine 393.

This sequence belongs to the EPSP synthase family. In terms of assembly, monomer.

The protein resides in the cytoplasm. It carries out the reaction 3-phosphoshikimate + phosphoenolpyruvate = 5-O-(1-carboxyvinyl)-3-phosphoshikimate + phosphate. Its pathway is metabolic intermediate biosynthesis; chorismate biosynthesis; chorismate from D-erythrose 4-phosphate and phosphoenolpyruvate: step 6/7. Catalyzes the transfer of the enolpyruvyl moiety of phosphoenolpyruvate (PEP) to the 5-hydroxyl of shikimate-3-phosphate (S3P) to produce enolpyruvyl shikimate-3-phosphate and inorganic phosphate. This chain is 3-phosphoshikimate 1-carboxyvinyltransferase, found in Chloroflexus aggregans (strain MD-66 / DSM 9485).